The chain runs to 25 residues: SMLSVLKNLGKVGLGFVACKINKQC.

Residues Cys19 and Cys25 are joined by a disulfide bond.

The protein belongs to the frog skin active peptide (FSAP) family. Ranatuerin subfamily. As to expression, expressed by the skin glands.

It is found in the secreted. Its function is as follows. Antibacterial activity against Gram-positive bacterium S.aureus (MIC=50 uM) and Gram-negative bacterium E.coli (MIC=2 uM). Has activity against C.albicans (MIC=70 uM). Shows no detectable hemolytic activity towards human erythrocytes. The protein is Ranatuerin-1 of Aquarana catesbeiana (American bullfrog).